Here is a 315-residue protein sequence, read N- to C-terminus: Pantothenate kinase (315 aa).

94–101 contributes to the ATP binding site; that stretch reads GSVAVGKS.

Belongs to the prokaryotic pantothenate kinase family.

It is found in the cytoplasm. It carries out the reaction (R)-pantothenate + ATP = (R)-4'-phosphopantothenate + ADP + H(+). The protein operates within cofactor biosynthesis; coenzyme A biosynthesis; CoA from (R)-pantothenate: step 1/5. The protein is Pantothenate kinase of Shewanella amazonensis (strain ATCC BAA-1098 / SB2B).